The following is a 189-amino-acid chain: dCTP deaminase, dUMP-forming (189 aa).

Residues 101–106 (KSSLGR), Asp-119, 127–129 (TLE), Gln-148, Tyr-162, and Gln-174 contribute to the dCTP site. The active-site Proton donor/acceptor is Glu-129. Residues 163–189 (GSSEAGSKYQGQRGPTPSKAYLNFNRS) are disordered.

This sequence belongs to the dCTP deaminase family. As to quaternary structure, homotrimer.

The enzyme catalyses dCTP + 2 H2O = dUMP + NH4(+) + diphosphate. It participates in pyrimidine metabolism; dUMP biosynthesis; dUMP from dCTP: step 1/1. In terms of biological role, bifunctional enzyme that catalyzes both the deamination of dCTP to dUTP and the hydrolysis of dUTP to dUMP without releasing the toxic dUTP intermediate. This is dCTP deaminase, dUMP-forming from Rhodococcus erythropolis (strain PR4 / NBRC 100887).